Reading from the N-terminus, the 307-residue chain is S-methyl-5'-thioadenosine phosphorylase (307 aa).

Residues Ser16, Arg59–His60, and Ser92–Ala93 each bind phosphate. Met198 provides a ligand contact to substrate. Ser199 is a phosphate binding site. Asp222–Asp224 serves as a coordination point for substrate.

The protein belongs to the PNP/MTAP phosphorylase family. MTAP subfamily. As to quaternary structure, homotrimer.

It is found in the cytoplasm. Its subcellular location is the nucleus. The enzyme catalyses S-methyl-5'-thioadenosine + phosphate = 5-(methylsulfanyl)-alpha-D-ribose 1-phosphate + adenine. It functions in the pathway amino-acid biosynthesis; L-methionine biosynthesis via salvage pathway; S-methyl-5-thio-alpha-D-ribose 1-phosphate from S-methyl-5'-thioadenosine (phosphorylase route): step 1/1. In terms of biological role, catalyzes the reversible phosphorylation of S-methyl-5'-thioadenosine (MTA) to adenine and 5-methylthioribose-1-phosphate. Involved in the breakdown of MTA, a major by-product of polyamine biosynthesis. Responsible for the first step in the methionine salvage pathway after MTA has been generated from S-adenosylmethionine. Has broad substrate specificity with 6-aminopurine nucleosides as preferred substrates. The protein is S-methyl-5'-thioadenosine phosphorylase of Schizosaccharomyces pombe (strain 972 / ATCC 24843) (Fission yeast).